A 119-amino-acid polypeptide reads, in one-letter code: Toxin ICK-11 (119 aa).

Residues 1-19 (MMKLYSLVIIATLAAAAFA) form the signal peptide. 4 cysteine pairs are disulfide-bonded: C59–C74, C67–C80, C71–C116, and C73–C87.

This sequence belongs to the neurotoxin 25 family. ICK-8 subfamily. In terms of tissue distribution, expressed by the venom gland.

The protein resides in the secreted. In terms of biological role, ion channel inhibitor. This chain is Toxin ICK-11, found in Trittame loki (Brush-footed trapdoor spider).